Here is a 106-residue protein sequence, read N- to C-terminus: Large ribosomal subunit protein uL23 (106 aa).

It belongs to the universal ribosomal protein uL23 family. Part of the 50S ribosomal subunit. Contacts protein L29, and trigger factor when it is bound to the ribosome.

Functionally, one of the early assembly proteins it binds 23S rRNA. One of the proteins that surrounds the polypeptide exit tunnel on the outside of the ribosome. Forms the main docking site for trigger factor binding to the ribosome. The protein is Large ribosomal subunit protein uL23 of Acinetobacter baumannii (strain AB307-0294).